The primary structure comprises 289 residues: Nucleotide-binding protein Francci3_1634 (289 aa).

13-20 is an ATP binding site; that stretch reads GLSGAGRS. 64–67 provides a ligand contact to GTP; the sequence is DVRG.

The protein belongs to the RapZ-like family.

Its function is as follows. Displays ATPase and GTPase activities. The sequence is that of Nucleotide-binding protein Francci3_1634 from Frankia casuarinae (strain DSM 45818 / CECT 9043 / HFP020203 / CcI3).